Consider the following 775-residue polypeptide: Glutamine--tRNA ligase (775 aa).

Alanine 2 carries the post-translational modification N-acetylalanine. At serine 70 the chain carries Phosphoserine. Residues 271–273 (EPN) and 277–283 (HIGHAKA) contribute to the ATP site. Aspartate 303 lines the L-glutamine pocket. Position 309 is an N6-acetyllysine (lysine 309). Tyrosine 438 is an L-glutamine binding site. ATP is bound by residues threonine 457, 486–487 (RL), and 494–496 (VSK). At serine 495 the chain carries Phosphoserine.

It belongs to the class-I aminoacyl-tRNA synthetase family. In terms of assembly, monomer. Part of a multisubunit complex that groups tRNA ligases for Arg (RARS1), Asp (DARS1), Gln (QARS1), Ile (IARS1), Leu (LARS1), Lys (KARS1), Met (MARS1) the bifunctional ligase for Glu and Pro (EPRS1) and the auxiliary subunits AIMP1/p43, AIMP2/p38 and EEF1E1/p18. Interacts with RARS1. Part of a complex composed of RARS1, QARS1 and AIMP1. In terms of tissue distribution, detected in dorsal root ganglia (at protein level). Detected in dorsal root ganglia.

The protein resides in the cytoplasm. Its subcellular location is the cytosol. It carries out the reaction tRNA(Gln) + L-glutamine + ATP = L-glutaminyl-tRNA(Gln) + AMP + diphosphate. Its function is as follows. Glutamine--tRNA ligase. Plays a critical role in brain development. This is Glutamine--tRNA ligase (Qars1) from Rattus norvegicus (Rat).